Consider the following 138-residue polypeptide: Probable phospholipase A2 homolog 1 (138 aa).

The N-terminal stretch at 1-21 is a signal peptide; sequence MPPRSPLLALVFLAAGVLSSA. 6 disulfide bridges follow: cysteine 29–cysteine 56, cysteine 33–cysteine 62, cysteine 38–cysteine 109, cysteine 49–cysteine 69, cysteine 68–cysteine 93, and cysteine 75–cysteine 86. The Ca(2+) site is built by tyrosine 48, glycine 50, and tryptophan 53. Histidine 72 is an active-site residue. Position 73 (aspartate 73) interacts with Ca(2+).

The protein belongs to the phospholipase A2 family. Ca(2+) is required as a cofactor.

The protein resides in the secreted. It carries out the reaction a 1,2-diacyl-sn-glycero-3-phosphocholine + H2O = a 1-acyl-sn-glycero-3-phosphocholine + a fatty acid + H(+). PA2 catalyzes the calcium-dependent hydrolysis of the 2-acyl groups in 3-sn-phosphoglycerides. Releases lysophospholipids (LPLs) and free fatty acids (FFAs) from membrane phospholipids in response to hormones and other external stimuli. The chain is Probable phospholipase A2 homolog 1 (PLA2-I) from Oryza sativa subsp. japonica (Rice).